The following is a 105-amino-acid chain: MEVSQFDNVSVVKKANLYFDGKCVSHTVLFPDGTRKTLGVIFPAALTFNTGAPEIMEINAGTCRVRLAGSEDWQTYGAGQQFSVPGNSSFDIEVQETLDYVCHFA.

Belongs to the nucleoside phosphorylase PpnP family.

It catalyses the reaction a purine D-ribonucleoside + phosphate = a purine nucleobase + alpha-D-ribose 1-phosphate. The enzyme catalyses adenosine + phosphate = alpha-D-ribose 1-phosphate + adenine. It carries out the reaction cytidine + phosphate = cytosine + alpha-D-ribose 1-phosphate. The catalysed reaction is guanosine + phosphate = alpha-D-ribose 1-phosphate + guanine. It catalyses the reaction inosine + phosphate = alpha-D-ribose 1-phosphate + hypoxanthine. The enzyme catalyses thymidine + phosphate = 2-deoxy-alpha-D-ribose 1-phosphate + thymine. It carries out the reaction uridine + phosphate = alpha-D-ribose 1-phosphate + uracil. The catalysed reaction is xanthosine + phosphate = alpha-D-ribose 1-phosphate + xanthine. Its function is as follows. Catalyzes the phosphorolysis of diverse nucleosides, yielding D-ribose 1-phosphate and the respective free bases. Can use uridine, adenosine, guanosine, cytidine, thymidine, inosine and xanthosine as substrates. Also catalyzes the reverse reactions. The chain is Pyrimidine/purine nucleoside phosphorylase from Cupriavidus necator (strain ATCC 17699 / DSM 428 / KCTC 22496 / NCIMB 10442 / H16 / Stanier 337) (Ralstonia eutropha).